The following is a 304-amino-acid chain: Homoserine kinase (304 aa).

ATP is bound at residue 90–100; that stretch reads PLARGLGSSAS.

The protein belongs to the GHMP kinase family. Homoserine kinase subfamily.

The protein localises to the cytoplasm. It carries out the reaction L-homoserine + ATP = O-phospho-L-homoserine + ADP + H(+). It participates in amino-acid biosynthesis; L-threonine biosynthesis; L-threonine from L-aspartate: step 4/5. Its function is as follows. Catalyzes the ATP-dependent phosphorylation of L-homoserine to L-homoserine phosphate. The protein is Homoserine kinase of Staphylococcus aureus (strain MSSA476).